A 278-amino-acid chain; its full sequence is DNA adenine methylase (278 aa).

The S-adenosyl-L-methionine site is built by Trp-10, Lys-14, Asp-54, and Asp-181.

The protein belongs to the N(4)/N(6)-methyltransferase family.

It carries out the reaction a 2'-deoxyadenosine in DNA + S-adenosyl-L-methionine = an N(6)-methyl-2'-deoxyadenosine in DNA + S-adenosyl-L-homocysteine + H(+). An alpha subtype methylase, recognizes the double-stranded sequence 5'-GATC-3' and methylates A-2. May be involved in methyl-directed DNA mismatch repair, initiation of chromosome replication and gene expression. The protein is DNA adenine methylase (dam) of Escherichia coli O157:H7.